We begin with the raw amino-acid sequence, 251 residues long: Ribosomal RNA small subunit methyltransferase G (251 aa).

S-adenosyl-L-methionine contacts are provided by residues G74, F79, 125–126 (AE), and R144. A disordered region spans residues 224-251 (RPAGLPTQHPLGAIEGAPRVESEEPEEP).

It belongs to the methyltransferase superfamily. RNA methyltransferase RsmG family.

The protein localises to the cytoplasm. Specifically methylates the N7 position of a guanine in 16S rRNA. The polypeptide is Ribosomal RNA small subunit methyltransferase G (Gloeobacter violaceus (strain ATCC 29082 / PCC 7421)).